The sequence spans 245 residues: tRNA pseudouridine synthase A (245 aa).

Residue D52 is the Nucleophile of the active site. A substrate-binding site is contributed by Y110.

Belongs to the tRNA pseudouridine synthase TruA family. In terms of assembly, homodimer.

The catalysed reaction is uridine(38/39/40) in tRNA = pseudouridine(38/39/40) in tRNA. In terms of biological role, formation of pseudouridine at positions 38, 39 and 40 in the anticodon stem and loop of transfer RNAs. The chain is tRNA pseudouridine synthase A from Borrelia hermsii (strain HS1 / DAH).